Reading from the N-terminus, the 172-residue chain is Putative phosphoesterase BcerKBAB4_1135 (172 aa).

His-34 functions as the Proton donor in the catalytic mechanism. 2 short sequence motifs (HXTX) span residues 34 to 37 (HITL) and 115 to 118 (HLTI). The active-site Proton acceptor is His-115.

The protein belongs to the 2H phosphoesterase superfamily. YjcG family.

This Bacillus mycoides (strain KBAB4) (Bacillus weihenstephanensis) protein is Putative phosphoesterase BcerKBAB4_1135.